Reading from the N-terminus, the 885-residue chain is Isoleucine--tRNA ligase (885 aa).

Residues 59-69 (PYANGDLHIGH) carry the 'HIGH' region motif. Residue Glu550 coordinates L-isoleucyl-5'-AMP. The short motif at 591–595 (KMSKS) is the 'KMSKS' region element. Lys594 provides a ligand contact to ATP. The Zn(2+) site is built by Cys861, Cys864, Cys877, and Cys880.

Belongs to the class-I aminoacyl-tRNA synthetase family. IleS type 1 subfamily. In terms of assembly, monomer. The cofactor is Zn(2+).

The protein localises to the cytoplasm. The enzyme catalyses tRNA(Ile) + L-isoleucine + ATP = L-isoleucyl-tRNA(Ile) + AMP + diphosphate. Functionally, catalyzes the attachment of isoleucine to tRNA(Ile). As IleRS can inadvertently accommodate and process structurally similar amino acids such as valine, to avoid such errors it has two additional distinct tRNA(Ile)-dependent editing activities. One activity is designated as 'pretransfer' editing and involves the hydrolysis of activated Val-AMP. The other activity is designated 'posttransfer' editing and involves deacylation of mischarged Val-tRNA(Ile). This Mycoplasma mobile (strain ATCC 43663 / 163K / NCTC 11711) (Mesomycoplasma mobile) protein is Isoleucine--tRNA ligase.